Here is a 394-residue protein sequence, read N- to C-terminus: Phosphoglycerate kinase (394 aa).

Substrate-binding positions include 21-23 (DLN), Arg36, 60-63 (HLGN), Arg114, and Arg147. ATP-binding positions include Lys198, Glu315, and 341-344 (GGET).

Belongs to the phosphoglycerate kinase family. In terms of assembly, monomer.

It localises to the cytoplasm. It catalyses the reaction (2R)-3-phosphoglycerate + ATP = (2R)-3-phospho-glyceroyl phosphate + ADP. It participates in carbohydrate degradation; glycolysis; pyruvate from D-glyceraldehyde 3-phosphate: step 2/5. The protein is Phosphoglycerate kinase of Wigglesworthia glossinidia brevipalpis.